The sequence spans 328 residues: RNA binding protein fox-1 homolog 3 (328 aa).

Pro residues predominate over residues 1–30 (MAQPYPPAQYPPPPQNGIPAEYAPPPPHPT). The tract at residues 1–106 (MAQPYPPAQY…QPKRLHVSNI (106 aa)) is disordered. Residues 49–87 (TPAQTHPEQPSSDTSTQPITGAQTVPQTDEAAQTDSQPL) are compositionally biased toward polar residues. Positions 99–172 (KRLHVSNIPF…NPVVGAVYGP (74 aa)) constitute an RRM domain. An Asymmetric dimethylarginine; alternate modification is found at Arg192. The residue at position 192 (Arg192) is an Omega-N-methylarginine; alternate. Arg288 carries the asymmetric dimethylarginine modification.

Its subcellular location is the nucleus. It is found in the cytoplasm. Pre-mRNA alternative splicing regulator. Regulates alternative splicing of RBFOX2 to enhance the production of mRNA species that are targeted for nonsense-mediated decay (NMD). This is RNA binding protein fox-1 homolog 3 (RBFOX3) from Bos taurus (Bovine).